Here is a 227-residue protein sequence, read N- to C-terminus: Cytochrome c oxidase subunit 2 (227 aa).

The Mitochondrial intermembrane portion of the chain corresponds to 1-14 (MAHPLQLGLQDASS). Residues 15 to 45 (PIMEELLYFHDHALMIVFLISSLVLYTISLM) traverse the membrane as a helical segment. Over 46 to 59 (LTTKLMHTSTMNAQ) the chain is Mitochondrial matrix. A helical membrane pass occupies residues 60-87 (MVETMWTILPAVILTSIALPSLRILYMT). The Mitochondrial intermembrane segment spans residues 88-227 (DEINNPLLTI…HFETWSTLTS (140 aa)). Cu cation contacts are provided by His-161, Cys-196, Glu-198, Cys-200, His-204, and Met-207. A Mg(2+)-binding site is contributed by Glu-198.

This sequence belongs to the cytochrome c oxidase subunit 2 family. As to quaternary structure, component of the cytochrome c oxidase (complex IV, CIV), a multisubunit enzyme composed of 14 subunits. The complex is composed of a catalytic core of 3 subunits MT-CO1, MT-CO2 and MT-CO3, encoded in the mitochondrial DNA, and 11 supernumerary subunits COX4I, COX5A, COX5B, COX6A, COX6B, COX6C, COX7A, COX7B, COX7C, COX8 and NDUFA4, which are encoded in the nuclear genome. The complex exists as a monomer or a dimer and forms supercomplexes (SCs) in the inner mitochondrial membrane with NADH-ubiquinone oxidoreductase (complex I, CI) and ubiquinol-cytochrome c oxidoreductase (cytochrome b-c1 complex, complex III, CIII), resulting in different assemblies (supercomplex SCI(1)III(2)IV(1) and megacomplex MCI(2)III(2)IV(2)). Found in a complex with TMEM177, COA6, COX18, COX20, SCO1 and SCO2. Interacts with TMEM177 in a COX20-dependent manner. Interacts with COX20. Interacts with COX16. It depends on Cu cation as a cofactor.

The protein resides in the mitochondrion inner membrane. The enzyme catalyses 4 Fe(II)-[cytochrome c] + O2 + 8 H(+)(in) = 4 Fe(III)-[cytochrome c] + 2 H2O + 4 H(+)(out). Its function is as follows. Component of the cytochrome c oxidase, the last enzyme in the mitochondrial electron transport chain which drives oxidative phosphorylation. The respiratory chain contains 3 multisubunit complexes succinate dehydrogenase (complex II, CII), ubiquinol-cytochrome c oxidoreductase (cytochrome b-c1 complex, complex III, CIII) and cytochrome c oxidase (complex IV, CIV), that cooperate to transfer electrons derived from NADH and succinate to molecular oxygen, creating an electrochemical gradient over the inner membrane that drives transmembrane transport and the ATP synthase. Cytochrome c oxidase is the component of the respiratory chain that catalyzes the reduction of oxygen to water. Electrons originating from reduced cytochrome c in the intermembrane space (IMS) are transferred via the dinuclear copper A center (CU(A)) of subunit 2 and heme A of subunit 1 to the active site in subunit 1, a binuclear center (BNC) formed by heme A3 and copper B (CU(B)). The BNC reduces molecular oxygen to 2 water molecules using 4 electrons from cytochrome c in the IMS and 4 protons from the mitochondrial matrix. This chain is Cytochrome c oxidase subunit 2 (MT-CO2), found in Galeopterus variegatus (Malayan flying lemur).